Here is a 99-residue protein sequence, read N- to C-terminus: Small ribosomal subunit protein uS14m (99 aa).

Belongs to the universal ribosomal protein uS14 family.

It localises to the mitochondrion. This chain is Small ribosomal subunit protein uS14m (RPS14), found in Prototheca wickerhamii.